The primary structure comprises 168 residues: ATP synthase subunit d, mitochondrial (168 aa).

It belongs to the ATPase d subunit family. F-type ATPases have 2 components, CF(1) - the catalytic core - and CF(0) - the membrane proton channel. CF(0) seems to have nine subunits: a, b, c, d, e, f, g, F6 and 8 (or A6L).

The protein resides in the mitochondrion. It is found in the mitochondrion inner membrane. Functionally, mitochondrial membrane ATP synthase (F(1)F(0) ATP synthase or Complex V) produces ATP from ADP in the presence of a proton gradient across the membrane which is generated by electron transport complexes of the respiratory chain. F-type ATPases consist of two structural domains, F(1) - containing the extramembraneous catalytic core, and F(0) - containing the membrane proton channel, linked together by a central stalk and a peripheral stalk. During catalysis, ATP synthesis in the catalytic domain of F(1) is coupled via a rotary mechanism of the central stalk subunits to proton translocation. Part of the complex F(0) domain and the peripheric stalk, which acts as a stator to hold the catalytic alpha(3)beta(3) subcomplex and subunit a/ATP6 static relative to the rotary elements. This is ATP synthase subunit d, mitochondrial from Arabidopsis thaliana (Mouse-ear cress).